Here is a 163-residue protein sequence, read N- to C-terminus: Sorting nexin-3 (163 aa).

The segment at 1-20 is disordered; that stretch reads MASDQDNSGLDAPGSQFHRP. A PX domain is found at 42–159; that stretch reads NFLEIEVRNP…AAFVQDPNWD (118 aa). The a 1,2-diacyl-sn-glycero-3-phospho-(1D-myo-inositol-3-phosphate) site is built by Arg-85, Ser-87, Lys-111, Arg-116, and Arg-125.

This sequence belongs to the sorting nexin family.

It is found in the cytoplasm. It localises to the golgi apparatus membrane. The protein resides in the prevacuolar compartment membrane. Required for retention of late Golgi membrane proteins. Component of the retrieval machinery that functions by direct interaction with the cytosolic tails of certain TGN membrane proteins during the sorting/budding process at the prevacuolar compartment. Binds phosphatidylinositol 3-phosphate (PtdIns(P3)). This is Sorting nexin-3 (SNX3) from Gibberella zeae (strain ATCC MYA-4620 / CBS 123657 / FGSC 9075 / NRRL 31084 / PH-1) (Wheat head blight fungus).